A 309-amino-acid chain; its full sequence is Succinate dehydrogenase [ubiquinone] iron-sulfur subunit 3, mitochondrial (309 aa).

A mitochondrion-targeting transit peptide spans Met1–Leu22. The 2Fe-2S ferredoxin-type domain maps to Phe69–Met160. 3 residues coordinate [2Fe-2S] cluster: Cys120, Cys125, and Cys140. The 4Fe-4S ferredoxin-type domain maps to Asp202–Phe232. Cys212, Cys215, and Cys218 together coordinate [4Fe-4S] cluster. Cys222 provides a ligand contact to [3Fe-4S] cluster. Trp227 serves as a coordination point for a ubiquinone. The [3Fe-4S] cluster site is built by Cys270 and Cys276. A [4Fe-4S] cluster-binding site is contributed by Cys280.

Belongs to the succinate dehydrogenase/fumarate reductase iron-sulfur protein family. In terms of assembly, component of complex II composed of eight subunits in plants: four classical SDH subunits SDH1, SDH2, SDH3 and SDH4 (a flavoprotein (FP), an iron-sulfur protein (IP), and a cytochrome b composed of a large and a small subunit.), as well as four subunits unknown in mitochondria from bacteria and heterotrophic eukaryotes. Requires [2Fe-2S] cluster as cofactor. The cofactor is [3Fe-4S] cluster. It depends on [4Fe-4S] cluster as a cofactor.

It localises to the mitochondrion inner membrane. The catalysed reaction is a quinone + succinate = fumarate + a quinol. Its pathway is carbohydrate metabolism; tricarboxylic acid cycle; fumarate from succinate (eukaryal route): step 1/1. In terms of biological role, iron-sulfur protein (IP) subunit of succinate dehydrogenase (SDH) that is involved in complex II of the mitochondrial electron transport chain and is responsible for transferring electrons from succinate to ubiquinone (coenzyme Q). The chain is Succinate dehydrogenase [ubiquinone] iron-sulfur subunit 3, mitochondrial (SDH2-3) from Arabidopsis thaliana (Mouse-ear cress).